A 178-amino-acid chain; its full sequence is Large ribosomal subunit protein uL6 (178 aa).

The protein belongs to the universal ribosomal protein uL6 family. As to quaternary structure, part of the 50S ribosomal subunit.

Functionally, this protein binds to the 23S rRNA, and is important in its secondary structure. It is located near the subunit interface in the base of the L7/L12 stalk, and near the tRNA binding site of the peptidyltransferase center. The chain is Large ribosomal subunit protein uL6 from Campylobacter fetus subsp. fetus (strain 82-40).